Reading from the N-terminus, the 241-residue chain is uncharacterized protein (241 aa).

7 consecutive transmembrane segments (helical) span residues 12–32, 39–59, 89–109, 117–137, 152–172, 180–200, and 215–235; these read ITEI…LLLL, LLWL…EMKF, VYDV…ICYT, YYTF…NCVV, LFEY…ATML, IHFY…WFVY, and YVEA…SPLI.

This sequence belongs to the mimivirus L68/R809 family.

It is found in the membrane. This is an uncharacterized protein from Acanthamoeba polyphaga mimivirus (APMV).